The chain runs to 219 residues: uncharacterized protein (219 aa).

The tract at residues valine 70–glutamine 102 is disordered. Over residues glycine 73 to glutamate 101 the composition is skewed to basic and acidic residues. Residues threonine 96–glutamate 120 adopt a coiled-coil conformation. 3 helical membrane-spanning segments follow: residues glycine 126–leucine 146, isoleucine 153–leucine 173, and threonine 192–phenylalanine 212.

It is found in the membrane. This is an uncharacterized protein from Acanthamoeba polyphaga mimivirus (APMV).